A 380-amino-acid polypeptide reads, in one-letter code: Outer membrane protein 40 (380 aa).

The N-terminal stretch at 1 to 21 is a signal peptide; it reads MKAKSLLLALAGLACTFSATA. Q22 bears the Pyrrolidone carboxylic acid mark. The OmpA-like domain occupies 270 to 380; it reads PTVTRVVVDN…NRIVVMTAAE (111 aa).

The protein belongs to the outer membrane OOP (TC 1.B.6) superfamily. Disulfide-linked heterodimer with Omp41.

It is found in the cell outer membrane. Functionally, may have porin activity and function in peptidoglycan binding. This is Outer membrane protein 40 from Porphyromonas gingivalis (strain ATCC BAA-308 / W83).